The following is a 208-amino-acid chain: Thymidylate kinase (208 aa).

7-14 (GIDGAGKT) provides a ligand contact to ATP.

The protein belongs to the thymidylate kinase family.

The enzyme catalyses dTMP + ATP = dTDP + ADP. Phosphorylation of dTMP to form dTDP in both de novo and salvage pathways of dTTP synthesis. This Xylella fastidiosa (strain Temecula1 / ATCC 700964) protein is Thymidylate kinase.